We begin with the raw amino-acid sequence, 294 residues long: Beta-glucoside kinase (294 aa).

5–11 (AFDIGGT) contributes to the ATP binding site.

It belongs to the ROK (NagC/XylR) family.

The catalysed reaction is D-cellobiose + ATP = 6-phospho-beta-D-glucosyl-(1-&gt;4)-D-glucose + ADP + H(+). Its function is as follows. Catalyzes the ATP-dependent phosphorylation of cellobiose to produce cellobiose-6'-P. May have a dual role of kinase and transcriptional regulator of the cellobiose-PTS operon. This is Beta-glucoside kinase (bglK) from Listeria monocytogenes serovar 1/2a (strain ATCC BAA-679 / EGD-e).